The chain runs to 272 residues: Ingression protein fic1 (272 aa).

One can recognise a C2 domain in the interval 1–107; the sequence is MSKNPLGTLV…MKEELQSEWY (107 aa). Positions 155–187 are disordered; sequence VPKKPSKPSKPRKKVPVSHPLPPTPPSREEHVS. A compositionally biased stretch (basic residues) spans 158–170; the sequence is KPSKPSKPRKKVP.

The protein belongs to the INN1/fic1 family. Interacts with cdc15 and imp2.

It localises to the cytoplasm. The protein resides in the nucleus. Involved in the ingression of the plasma membrane during cytokinesis, leading to the separation of the daughter cells. Unlike its S.cerevisiae ortholog INN1, it does not play an essential role, probably because the actinomyosin ring is connected to the cell cortex by many more proteins. The protein is Ingression protein fic1 (fic1) of Schizosaccharomyces pombe (strain 972 / ATCC 24843) (Fission yeast).